Reading from the N-terminus, the 235-residue chain is Methylosome subunit pICln (235 aa).

The interval M1 to P21 is disordered. S2 is modified (N-acetylserine). 6 positions are modified to phosphoserine: S100, S142, S191, S193, S196, and S208. Residues L133–Q157 form a disordered region. The span at P137–D151 shows a compositional bias: acidic residues. Positions S195–E217 are disordered. Basic and acidic residues predominate over residues R204 to E213. T221 carries the post-translational modification Phosphothreonine.

The protein belongs to the pICln (TC 1.A.47) family. Component of the methylosome, a 20S complex containing at least PRMT5/SKB1, WDR77/MEP50 and CLNS1A/pICln. May mediate SNRPD1 and SNRPD3 methylation. Forms a 6S pICln-Sm complex composed of CLNS1A/pICln, SNRPD1, SNRPD2, SNRPE, SNRPF and SNRPG; ring-like structure where CLNS1A/pICln mimics additional Sm proteins and which is unable to assemble into the core snRNP. Interacts with LSM10 and LSM11.

The protein resides in the cytoplasm. It localises to the cytosol. Its subcellular location is the nucleus. It is found in the cytoskeleton. Its function is as follows. Involved in both the assembly of spliceosomal snRNPs and the methylation of Sm proteins. Chaperone that regulates the assembly of spliceosomal U1, U2, U4 and U5 small nuclear ribonucleoproteins (snRNPs), the building blocks of the spliceosome, and thereby plays an important role in the splicing of cellular pre-mRNAs. Most spliceosomal snRNPs contain a common set of Sm proteins SNRPB, SNRPD1, SNRPD2, SNRPD3, SNRPE, SNRPF and SNRPG that assemble in a heptameric protein ring on the Sm site of the small nuclear RNA to form the core snRNP (Sm core). In the cytosol, the Sm proteins SNRPD1, SNRPD2, SNRPE, SNRPF and SNRPG are trapped in an inactive 6S pICln-Sm complex by the chaperone CLNS1A that controls the assembly of the core snRNP. Dissociation by the SMN complex of CLNS1A from the trapped Sm proteins and their transfer to an SMN-Sm complex triggers the assembly of core snRNPs and their transport to the nucleus. The sequence is that of Methylosome subunit pICln (CLNS1A) from Canis lupus familiaris (Dog).